The sequence spans 23 residues: Acidic phospholipase A2 Cvv-E6c (23 aa).

Requires Ca(2+) as cofactor. Contains 7 disulfide bonds. Expressed by the venom gland.

The protein localises to the secreted. The catalysed reaction is a 1,2-diacyl-sn-glycero-3-phosphocholine + H2O = a 1-acyl-sn-glycero-3-phosphocholine + a fatty acid + H(+). In terms of biological role, snake venom phospholipase A2 (PLA2) that significantly inhibits ADP-induced platelet aggregation in platelet-rich plasma of human, rabbit and guinea pig. PLA2 catalyzes the calcium-dependent hydrolysis of the 2-acyl groups in 3-sn-phosphoglycerides. The polypeptide is Acidic phospholipase A2 Cvv-E6c (Crotalus viridis viridis (Prairie rattlesnake)).